The chain runs to 219 residues: 2-C-methyl-D-erythritol 4-phosphate cytidylyltransferase (219 aa).

Belongs to the IspD/TarI cytidylyltransferase family. IspD subfamily.

It catalyses the reaction 2-C-methyl-D-erythritol 4-phosphate + CTP + H(+) = 4-CDP-2-C-methyl-D-erythritol + diphosphate. It participates in isoprenoid biosynthesis; isopentenyl diphosphate biosynthesis via DXP pathway; isopentenyl diphosphate from 1-deoxy-D-xylulose 5-phosphate: step 2/6. Functionally, catalyzes the formation of 4-diphosphocytidyl-2-C-methyl-D-erythritol from CTP and 2-C-methyl-D-erythritol 4-phosphate (MEP). In Bacteroides fragilis (strain ATCC 25285 / DSM 2151 / CCUG 4856 / JCM 11019 / LMG 10263 / NCTC 9343 / Onslow / VPI 2553 / EN-2), this protein is 2-C-methyl-D-erythritol 4-phosphate cytidylyltransferase.